We begin with the raw amino-acid sequence, 227 residues long: Cytochrome c oxidase subunit 2 (227 aa).

Topologically, residues 1–14 (MAYPLQLGFQDATS) are mitochondrial intermembrane. A helical transmembrane segment spans residues 15 to 45 (PVMEELLHFHDHTLMIIFLISSLVLYIIMLM). Topologically, residues 46 to 59 (LTTKLIHTNMMNVQ) are mitochondrial matrix. A helical membrane pass occupies residues 60–87 (EMEMIWTILPAIILILIALPSLHTLYMM). The Mitochondrial intermembrane segment spans residues 88–227 (DEINNPLLTI…YFESWSASLA (140 aa)). Cu cation is bound by residues histidine 161, cysteine 196, glutamate 198, cysteine 200, histidine 204, and methionine 207. Glutamate 198 serves as a coordination point for Mg(2+). Tyrosine 218 carries the post-translational modification Phosphotyrosine.

The protein belongs to the cytochrome c oxidase subunit 2 family. In terms of assembly, component of the cytochrome c oxidase (complex IV, CIV), a multisubunit enzyme composed of 14 subunits. The complex is composed of a catalytic core of 3 subunits MT-CO1, MT-CO2 and MT-CO3, encoded in the mitochondrial DNA, and 11 supernumerary subunits COX4I, COX5A, COX5B, COX6A, COX6B, COX6C, COX7A, COX7B, COX7C, COX8 and NDUFA4, which are encoded in the nuclear genome. The complex exists as a monomer or a dimer and forms supercomplexes (SCs) in the inner mitochondrial membrane with NADH-ubiquinone oxidoreductase (complex I, CI) and ubiquinol-cytochrome c oxidoreductase (cytochrome b-c1 complex, complex III, CIII), resulting in different assemblies (supercomplex SCI(1)III(2)IV(1) and megacomplex MCI(2)III(2)IV(2)). Found in a complex with TMEM177, COA6, COX18, COX20, SCO1 and SCO2. Interacts with TMEM177 in a COX20-dependent manner. Interacts with COX20. Interacts with COX16. The cofactor is Cu cation.

The protein resides in the mitochondrion inner membrane. The enzyme catalyses 4 Fe(II)-[cytochrome c] + O2 + 8 H(+)(in) = 4 Fe(III)-[cytochrome c] + 2 H2O + 4 H(+)(out). Its function is as follows. Component of the cytochrome c oxidase, the last enzyme in the mitochondrial electron transport chain which drives oxidative phosphorylation. The respiratory chain contains 3 multisubunit complexes succinate dehydrogenase (complex II, CII), ubiquinol-cytochrome c oxidoreductase (cytochrome b-c1 complex, complex III, CIII) and cytochrome c oxidase (complex IV, CIV), that cooperate to transfer electrons derived from NADH and succinate to molecular oxygen, creating an electrochemical gradient over the inner membrane that drives transmembrane transport and the ATP synthase. Cytochrome c oxidase is the component of the respiratory chain that catalyzes the reduction of oxygen to water. Electrons originating from reduced cytochrome c in the intermembrane space (IMS) are transferred via the dinuclear copper A center (CU(A)) of subunit 2 and heme A of subunit 1 to the active site in subunit 1, a binuclear center (BNC) formed by heme A3 and copper B (CU(B)). The BNC reduces molecular oxygen to 2 water molecules using 4 electrons from cytochrome c in the IMS and 4 protons from the mitochondrial matrix. The protein is Cytochrome c oxidase subunit 2 (MT-CO2) of Elephas maximus (Indian elephant).